A 255-amino-acid chain; its full sequence is Hydroxyacylglutathione hydrolase (255 aa).

Zn(2+) contacts are provided by His56, His58, Asp60, His61, His114, Asp133, and His171.

Belongs to the metallo-beta-lactamase superfamily. Glyoxalase II family. In terms of assembly, monomer. Zn(2+) serves as cofactor.

It catalyses the reaction an S-(2-hydroxyacyl)glutathione + H2O = a 2-hydroxy carboxylate + glutathione + H(+). Its pathway is secondary metabolite metabolism; methylglyoxal degradation; (R)-lactate from methylglyoxal: step 2/2. Functionally, thiolesterase that catalyzes the hydrolysis of S-D-lactoyl-glutathione to form glutathione and D-lactic acid. This Ruegeria pomeroyi (strain ATCC 700808 / DSM 15171 / DSS-3) (Silicibacter pomeroyi) protein is Hydroxyacylglutathione hydrolase.